The following is a 1379-amino-acid chain: DNA-directed RNA polymerase subunit beta'' (1379 aa).

4 residues coordinate Zn(2+): C220, C293, C300, and C303.

This sequence belongs to the RNA polymerase beta' chain family. RpoC2 subfamily. As to quaternary structure, in plastids the minimal PEP RNA polymerase catalytic core is composed of four subunits: alpha, beta, beta', and beta''. When a (nuclear-encoded) sigma factor is associated with the core the holoenzyme is formed, which can initiate transcription. It depends on Zn(2+) as a cofactor.

The protein resides in the plastid. Its subcellular location is the chloroplast. It carries out the reaction RNA(n) + a ribonucleoside 5'-triphosphate = RNA(n+1) + diphosphate. Its function is as follows. DNA-dependent RNA polymerase catalyzes the transcription of DNA into RNA using the four ribonucleoside triphosphates as substrates. This is DNA-directed RNA polymerase subunit beta'' from Capsella bursa-pastoris (Shepherd's purse).